Here is a 149-residue protein sequence, read N- to C-terminus: Transcriptional repressor NrdR (149 aa).

Residues 3 to 34 fold into a zinc finger; that stretch reads CPFCGHAATQVIDTRMSEEGDTVRRRRRCESC. In terms of domain architecture, ATP-cone spans 49-139; sequence PAVVKKNGSR…VYRSFEDVSE (91 aa).

It belongs to the NrdR family. It depends on Zn(2+) as a cofactor.

Negatively regulates transcription of bacterial ribonucleotide reductase nrd genes and operons by binding to NrdR-boxes. The polypeptide is Transcriptional repressor NrdR (Ralstonia nicotianae (strain ATCC BAA-1114 / GMI1000) (Ralstonia solanacearum)).